Reading from the N-terminus, the 333-residue chain is Heat shock transcription factor, X-linked member 4 (333 aa).

Residues 1 to 66 (MASQNTEQEY…QDNSPPEDRN (66 aa)) are disordered. Residues 29–39 (GSSPDPNPDSS) are compositionally biased toward low complexity. Residues 49-60 (AMSQDPGSQDNS) show a composition bias toward polar residues. A DNA-binding region spans residues 79-182 (FRLSFPRKLW…PRLLENIQRK (104 aa)). Residues 227–275 (QGAPSVQGPSGTQSFRRSGMWSKKSATRHPLGNGPPQEPNGPSWEGTSG) form a disordered region. Residues 228–242 (GAPSVQGPSGTQSFR) show a composition bias toward polar residues.

The protein belongs to the HSF family.

It localises to the nucleus. The sequence is that of Heat shock transcription factor, X-linked member 4 from Homo sapiens (Human).